The chain runs to 128 residues: Early 4 ORF1 protein (128 aa).

The Cytoplasmic portion of the chain corresponds to Met1–Ser26. Residues Gly27–Leu47 traverse the membrane as a helical segment. Residues Ser48–Gln99 are Extracellular-facing. Residues Phe100 to Pro120 form a helical membrane-spanning segment. Residues Val121–Val128 are Cytoplasmic-facing. The PBZ domain binding motif signature appears at Ala125–Val128.

It belongs to the adenoviridae E4-ORF1 family. In terms of assembly, may interact with host PDZ proteins through the PDZ domain binding motif (PBM), namely host DLG1, PATJ and TJP2.

It is found in the host membrane. Its function is as follows. May modulate tight-junctions functions of infected cells through interactions with PDZ proteins. E4 ORF1 has ben show for Adenovirus 9 to interact with protein involved in tight junction regulation. May play a role in mTOR activation by activating PI3-kinase, thus overriding cellular checkpoint for translation. The chain is Early 4 ORF1 protein from Human adenovirus C serotype 2 (HAdV-2).